A 627-amino-acid chain; its full sequence is (-)-alpha-terpineol synthase, chloroplastic (627 aa).

Residues 1–52 constitute a chloroplast transit peptide; it reads MDLISVLPSASKSCVCLHKPLSSSTHKLKPFCKTIRILVMPRRWEFARPSMS. Mg(2+)-binding residues include Asp-378, Asp-382, and Asp-530. The DDXXD motif motif lies at 378–382; sequence DDMYD.

This sequence belongs to the terpene synthase family. Tpsd subfamily. Requires Mg(2+) as cofactor. Mn(2+) is required as a cofactor.

The protein localises to the plastid. Its subcellular location is the chloroplast. The catalysed reaction is (2E)-geranyl diphosphate + H2O = (S)-alpha-terpineol + diphosphate. It participates in terpene metabolism; oleoresin biosynthesis. Its function is as follows. Involved in defensive oleoresin formation in conifers in response to insect attack or other injury. Involved in monoterpene (C10) olefins biosynthesis. Produces 57.3% alpha-terpineol (15.1% (+)/84.9% (-)), 27.6% limonene (25.2% (+)/74.8% (-)), 8% terpinolene, 4.7% beta-pinene (14.8% (+)/85.2% (-)), 1.3% alpha-pinene (100% (+)) and 1.1% myrcene. In Pinus taeda (Loblolly pine), this protein is (-)-alpha-terpineol synthase, chloroplastic (PT10).